A 125-amino-acid chain; its full sequence is Large ribosomal subunit protein bL12 (125 aa).

The protein belongs to the bacterial ribosomal protein bL12 family. As to quaternary structure, homodimer. Part of the ribosomal stalk of the 50S ribosomal subunit. Forms a multimeric L10(L12)X complex, where L10 forms an elongated spine to which 2 to 4 L12 dimers bind in a sequential fashion. Binds GTP-bound translation factors.

Its function is as follows. Forms part of the ribosomal stalk which helps the ribosome interact with GTP-bound translation factors. Is thus essential for accurate translation. This Hyphomonas neptunium (strain ATCC 15444) protein is Large ribosomal subunit protein bL12.